A 340-amino-acid chain; its full sequence is Anthranilate phosphoribosyltransferase (340 aa).

Residues Gly-81, 84–85 (GD), Thr-89, 91–94 (NIST), 109–117 (KHGNRGATS), and Ser-121 contribute to the 5-phospho-alpha-D-ribose 1-diphosphate site. Gly-81 lines the anthranilate pocket. Residue Ser-93 participates in Mg(2+) binding. Asn-112 is an anthranilate binding site. Residue Arg-167 participates in anthranilate binding. 2 residues coordinate Mg(2+): Asp-225 and Glu-226.

This sequence belongs to the anthranilate phosphoribosyltransferase family. Homodimer. It depends on Mg(2+) as a cofactor.

The enzyme catalyses N-(5-phospho-beta-D-ribosyl)anthranilate + diphosphate = 5-phospho-alpha-D-ribose 1-diphosphate + anthranilate. It participates in amino-acid biosynthesis; L-tryptophan biosynthesis; L-tryptophan from chorismate: step 2/5. Its function is as follows. Catalyzes the transfer of the phosphoribosyl group of 5-phosphorylribose-1-pyrophosphate (PRPP) to anthranilate to yield N-(5'-phosphoribosyl)-anthranilate (PRA). The polypeptide is Anthranilate phosphoribosyltransferase (Methanocorpusculum labreanum (strain ATCC 43576 / DSM 4855 / Z)).